The primary structure comprises 150 residues: 3-dehydroquinate dehydratase (150 aa).

Tyr26 acts as the Proton acceptor in catalysis. Residues Asn77, His83, and Asp90 each coordinate substrate. His103 serves as the catalytic Proton donor. Substrate contacts are provided by residues 104–105 (LS) and Arg114.

Belongs to the type-II 3-dehydroquinase family. In terms of assembly, homododecamer.

The enzyme catalyses 3-dehydroquinate = 3-dehydroshikimate + H2O. It functions in the pathway metabolic intermediate biosynthesis; chorismate biosynthesis; chorismate from D-erythrose 4-phosphate and phosphoenolpyruvate: step 3/7. Functionally, catalyzes a trans-dehydration via an enolate intermediate. The sequence is that of 3-dehydroquinate dehydratase from Pseudoalteromonas translucida (strain TAC 125).